We begin with the raw amino-acid sequence, 549 residues long: Hydroxylamine reductase (549 aa).

[4Fe-4S] cluster contacts are provided by C5, C8, C17, and C23. Hybrid [4Fe-2O-2S] cluster-binding residues include H243, E267, C311, C403, C431, C456, E491, and K493. C403 is subject to Cysteine persulfide.

The protein belongs to the HCP family. [4Fe-4S] cluster serves as cofactor. Hybrid [4Fe-2O-2S] cluster is required as a cofactor.

It is found in the cytoplasm. It catalyses the reaction A + NH4(+) + H2O = hydroxylamine + AH2 + H(+). In terms of biological role, catalyzes the reduction of hydroxylamine to form NH(3) and H(2)O. The protein is Hydroxylamine reductase of Desulfitobacterium hafniense (strain DSM 10664 / DCB-2).